A 207-amino-acid chain; its full sequence is Small ribosomal subunit protein uS7y (207 aa).

N-acetylalanine is present on alanine 2.

It belongs to the universal ribosomal protein uS7 family. As to expression, expressed in root tips, lateral root primordia, leaf primordia, shoot apical meristem and vasculature of cotyledons.

This Arabidopsis thaliana (Mouse-ear cress) protein is Small ribosomal subunit protein uS7y.